A 92-amino-acid chain; its full sequence is Small ribosomal subunit protein uS19 (92 aa).

The protein belongs to the universal ribosomal protein uS19 family.

Functionally, protein S19 forms a complex with S13 that binds strongly to the 16S ribosomal RNA. This Bartonella henselae (strain ATCC 49882 / DSM 28221 / CCUG 30454 / Houston 1) (Rochalimaea henselae) protein is Small ribosomal subunit protein uS19.